A 100-amino-acid chain; its full sequence is Large ribosomal subunit protein uL23 (100 aa).

The protein belongs to the universal ribosomal protein uL23 family. Part of the 50S ribosomal subunit. Contacts protein L29, and trigger factor when it is bound to the ribosome.

Its function is as follows. One of the early assembly proteins it binds 23S rRNA. One of the proteins that surrounds the polypeptide exit tunnel on the outside of the ribosome. Forms the main docking site for trigger factor binding to the ribosome. The polypeptide is Large ribosomal subunit protein uL23 (Mycobacterium sp. (strain JLS)).